The sequence spans 376 residues: Succinyl-diaminopimelate desuccinylase (376 aa).

H66 contributes to the Zn(2+) binding site. D68 is a catalytic residue. D99 contributes to the Zn(2+) binding site. Catalysis depends on E133, which acts as the Proton acceptor. Zn(2+)-binding residues include E134, E162, and H349.

It belongs to the peptidase M20A family. DapE subfamily. Homodimer. Zn(2+) is required as a cofactor. Co(2+) serves as cofactor.

The catalysed reaction is N-succinyl-(2S,6S)-2,6-diaminopimelate + H2O = (2S,6S)-2,6-diaminopimelate + succinate. It functions in the pathway amino-acid biosynthesis; L-lysine biosynthesis via DAP pathway; LL-2,6-diaminopimelate from (S)-tetrahydrodipicolinate (succinylase route): step 3/3. Functionally, catalyzes the hydrolysis of N-succinyl-L,L-diaminopimelic acid (SDAP), forming succinate and LL-2,6-diaminopimelate (DAP), an intermediate involved in the bacterial biosynthesis of lysine and meso-diaminopimelic acid, an essential component of bacterial cell walls. The polypeptide is Succinyl-diaminopimelate desuccinylase (Buchnera aphidicola subsp. Cinara cedri (strain Cc)).